Consider the following 504-residue polypeptide: Probable cytochrome P450 513F1 (504 aa).

A helical membrane pass occupies residues 1–21 (MILSLLFLFVITLYFLIPSRI). Cysteine 449 contributes to the heme binding site.

Belongs to the cytochrome P450 family. It depends on heme as a cofactor.

It localises to the membrane. The chain is Probable cytochrome P450 513F1 (cyp513F1) from Dictyostelium discoideum (Social amoeba).